Reading from the N-terminus, the 376-residue chain is Acetylornithine aminotransferase (376 aa).

Residues 96–97 and Phe-128 each bind pyridoxal 5'-phosphate; that span reads GT. Arg-131 contacts N(2)-acetyl-L-ornithine. 213–216 contacts pyridoxal 5'-phosphate; it reads DEVQ. Lys-242 carries the post-translational modification N6-(pyridoxal phosphate)lysine. Ser-270 is a N(2)-acetyl-L-ornithine binding site. Thr-271 serves as a coordination point for pyridoxal 5'-phosphate.

This sequence belongs to the class-III pyridoxal-phosphate-dependent aminotransferase family. ArgD subfamily. As to quaternary structure, homodimer. Requires pyridoxal 5'-phosphate as cofactor.

The protein resides in the cytoplasm. The catalysed reaction is N(2)-acetyl-L-ornithine + 2-oxoglutarate = N-acetyl-L-glutamate 5-semialdehyde + L-glutamate. It functions in the pathway amino-acid biosynthesis; L-arginine biosynthesis; N(2)-acetyl-L-ornithine from L-glutamate: step 4/4. The protein is Acetylornithine aminotransferase of Aquifex aeolicus (strain VF5).